Consider the following 137-residue polypeptide: Proofreading thioesterase EntH (137 aa).

The active-site Nucleophile or proton acceptor is the Glu-63.

Belongs to the thioesterase PaaI family. As to quaternary structure, homotetramer. Dimer of dimers. Interacts specifically with the aryl carrier protein (ArCP) domain of EntB.

It localises to the cytoplasm. It functions in the pathway siderophore biosynthesis; enterobactin biosynthesis. Functionally, required for optimal enterobactin synthesis. Acts as a proofreading enzyme that prevents EntB misacylation by hydrolyzing the thioester bound existing between EntB and wrongly charged molecules. The chain is Proofreading thioesterase EntH from Salmonella typhimurium (strain LT2 / SGSC1412 / ATCC 700720).